The chain runs to 182 residues: Crossover junction endodeoxyribonuclease RuvC (182 aa).

Catalysis depends on residues D7, E67, and D139. Positions 7, 67, and 139 each coordinate Mg(2+).

It belongs to the RuvC family. As to quaternary structure, homodimer which binds Holliday junction (HJ) DNA. The HJ becomes 2-fold symmetrical on binding to RuvC with unstacked arms; it has a different conformation from HJ DNA in complex with RuvA. In the full resolvosome a probable DNA-RuvA(4)-RuvB(12)-RuvC(2) complex forms which resolves the HJ. Mg(2+) serves as cofactor.

Its subcellular location is the cytoplasm. It catalyses the reaction Endonucleolytic cleavage at a junction such as a reciprocal single-stranded crossover between two homologous DNA duplexes (Holliday junction).. The RuvA-RuvB-RuvC complex processes Holliday junction (HJ) DNA during genetic recombination and DNA repair. Endonuclease that resolves HJ intermediates. Cleaves cruciform DNA by making single-stranded nicks across the HJ at symmetrical positions within the homologous arms, yielding a 5'-phosphate and a 3'-hydroxyl group; requires a central core of homology in the junction. The consensus cleavage sequence is 5'-(A/T)TT(C/G)-3'. Cleavage occurs on the 3'-side of the TT dinucleotide at the point of strand exchange. HJ branch migration catalyzed by RuvA-RuvB allows RuvC to scan DNA until it finds its consensus sequence, where it cleaves and resolves the cruciform DNA. The protein is Crossover junction endodeoxyribonuclease RuvC of Bordetella parapertussis (strain 12822 / ATCC BAA-587 / NCTC 13253).